Consider the following 490-residue polypeptide: Protoporphyrinogen oxidase (490 aa).

FAD contacts are provided by residues 7 to 12 (GGGIAG), 32 to 33 (EK), Trp-40, 61 to 64 (GPRT), and 466 to 468 (VSI).

This sequence belongs to the protoporphyrinogen/coproporphyrinogen oxidase family. Protoporphyrinogen oxidase subfamily. The cofactor is FAD.

It is found in the mitochondrion. It catalyses the reaction protoporphyrinogen IX + 3 O2 = protoporphyrin IX + 3 H2O2. It functions in the pathway porphyrin-containing compound metabolism; protoporphyrin-IX biosynthesis; protoporphyrin-IX from protoporphyrinogen-IX: step 1/1. Its function is as follows. Catalyzes the 6-electron oxidation of protoporphyrinogen-IX to form protoporphyrin-IX. This Schizosaccharomyces pombe (strain 972 / ATCC 24843) (Fission yeast) protein is Protoporphyrinogen oxidase (hem14).